The primary structure comprises 234 residues: DNA repair protein RecO (234 aa).

It belongs to the RecO family.

Involved in DNA repair and RecF pathway recombination. The sequence is that of DNA repair protein RecO from Coxiella burnetii (strain RSA 331 / Henzerling II).